Here is a 481-residue protein sequence, read N- to C-terminus: Mechanosensory protein 2 (481 aa).

Over residues 1–22 the composition is skewed to low complexity; sequence MSATMSSARNSVVSLSSNGSVK. Disordered regions lie at residues 1 to 67 and 80 to 104; these read MSAT…MATR and SANS…GNGK. A compositionally biased stretch (polar residues) spans 27-38; it reads LVSNERSSSIQQ. The span at 86–104 shows a compositional bias: basic and acidic residues; the sequence is DSVKKEKQAEKDVEKGNGK. Residues 115–135 traverse the membrane as a helical segment; the sequence is GVCGWILTILSYLLIFFTLPI. The segment covering 403-421 has biased composition (gly residues); that stretch reads EGGGGHGHSHGGGGGGLGS. The tract at residues 403-481 is disordered; sequence EGGGGHGHSH…SQLDPALLIR (79 aa). Positions 433-447 are enriched in low complexity; the sequence is SGPSTTTTSGRPLLR. Residues 463-473 show a composition bias toward polar residues; sequence APNQSQTSVSQ.

Belongs to the band 7/mec-2 family. As to quaternary structure, component of a non-voltage-gated amiloride-sensitive cation channel complex (also called the degenerin channel complex) composed of at least the mec-2, mec-4, mec-6 and mec-10 subunits; the complex mediates mechanotransduction in touch cells. Interacts with mec-6 and mec-4.

It localises to the membrane. In terms of biological role, subunit of an amiloride-sensitive cation channel (degenerin channel complex) permeable for sodium, potassium, lithium and N-methylglucamine, and required for mechanosensory transduction (touch sensitivity). Positively regulates the activity of the putative mechanosensory transduction channel. May link the mechanosensory channel and the microtubule cytoskeleton of the touch receptor neurons. Required for the function of a set of six touch receptor neurons. The chain is Mechanosensory protein 2 from Caenorhabditis elegans.